A 560-amino-acid chain; its full sequence is RNA polymerase-associated protein C651.09c (560 aa).

Disordered stretches follow at residues 15-74 (DDSD…KNPY) and 128-207 (YMAQ…KVEQ). Residues 148 to 171 (GKRDKLTELKKRRQERSARSVSER) show a composition bias toward basic and acidic residues. The segment covering 180-195 (DYEEQNESEKSEEEEG) has biased composition (acidic residues). Ser-197 bears the Phosphoserine mark. The Plus3 domain occupies 214–345 (SANLYDLNAI…KLNDLRDMSK (132 aa)). Positions 387 to 456 (AGNAELVKEI…RRRLSAAATA (70 aa)) form a coiled coil. Over residues 440-449 (EQRMNEERRR) the composition is skewed to basic and acidic residues. Positions 440–486 (EQRMNEERRRLSAAATATPMSAPTSVLTGTSPQPSPSLSTSIMSTPK) are disordered. Positions 451–480 (SAAATATPMSAPTSVLTGTSPQPSPSLSTS) are enriched in low complexity. Phosphoserine occurs at positions 502 and 506.

As to quaternary structure, component of the PAF1 complex.

It localises to the nucleus. The protein localises to the nucleoplasm. In terms of biological role, the PAF1 complex is a multifunctional complex. Involved in transcription initiation via genetic interactions with TATA-binding proteins. Involved in elongation. Also has a role in transcription-coupled histone modification. Important for TATA site selection by TBP. Directly or indirectly regulates the DNA-binding properties of the TATA box-binding protein, and the relative activities of different TATA elements. The protein is RNA polymerase-associated protein C651.09c of Schizosaccharomyces pombe (strain 972 / ATCC 24843) (Fission yeast).